Here is a 526-residue protein sequence, read N- to C-terminus: Probable feruloyl esterase B-1 (526 aa).

A signal peptide spans 1 to 19; that stretch reads MPSLRRLLPFLAAGSAALA. Intrachain disulfides connect C28/C75 and C63/C114. N-linked (GlcNAc...) asparagine glycans are attached at residues N53, N85, N98, and N138. Cystine bridges form between C187–C441, C256–C273, and C282–C291. S188 (acyl-ester intermediate) is an active-site residue. N246 is a glycosylation site (N-linked (GlcNAc...) asparagine). Ca(2+) contacts are provided by D257, D260, A262, D264, and I266. 2 N-linked (GlcNAc...) asparagine glycosylation sites follow: N287 and N311. Active-site charge relay system residues include D400 and H440. Residues N490 and N516 are each glycosylated (N-linked (GlcNAc...) asparagine). C503 and C525 are disulfide-bonded.

It belongs to the tannase family.

It is found in the secreted. The enzyme catalyses feruloyl-polysaccharide + H2O = ferulate + polysaccharide.. Its function is as follows. Involved in degradation of plant cell walls. Hydrolyzes the feruloyl-arabinose ester bond in arabinoxylans as well as the feruloyl-galactose and feruloyl-arabinose ester bonds in pectin. In Aspergillus flavus (strain ATCC 200026 / FGSC A1120 / IAM 13836 / NRRL 3357 / JCM 12722 / SRRC 167), this protein is Probable feruloyl esterase B-1 (faeB-1).